The primary structure comprises 99 residues: uncharacterized protein (99 aa).

Positions methionine 1–glycine 17 are cleaved as a signal peptide. Cysteine 18 is lipidated: N-palmitoyl cysteine. Cysteine 18 carries S-diacylglycerol cysteine lipidation.

Its subcellular location is the cell membrane. This is an uncharacterized protein from Escherichia coli O6:H1 (strain CFT073 / ATCC 700928 / UPEC).